The sequence spans 449 residues: Glucose-6-phosphate isomerase (449 aa).

The active-site Proton donor is the E291. Active-site residues include H312 and K426.

It belongs to the GPI family.

The protein resides in the cytoplasm. It catalyses the reaction alpha-D-glucose 6-phosphate = beta-D-fructose 6-phosphate. It participates in carbohydrate biosynthesis; gluconeogenesis. It functions in the pathway carbohydrate degradation; glycolysis; D-glyceraldehyde 3-phosphate and glycerone phosphate from D-glucose: step 2/4. Its function is as follows. Catalyzes the reversible isomerization of glucose-6-phosphate to fructose-6-phosphate. This Streptococcus pyogenes serotype M4 (strain MGAS10750) protein is Glucose-6-phosphate isomerase.